The primary structure comprises 269 residues: Putative esterase/lipase 1 (269 aa).

Residue His-27 is part of the active site. Ser-94 functions as the Charge relay system in the catalytic mechanism.

This sequence belongs to the lipase/esterase LIP3/BchO family.

This is Putative esterase/lipase 1 from Mycoplasma pneumoniae (strain ATCC 29342 / M129 / Subtype 1) (Mycoplasmoides pneumoniae).